We begin with the raw amino-acid sequence, 550 residues long: Arginine--tRNA ligase (550 aa).

Residues 130-140 (ANPTGPIHIGG) carry the 'HIGH' region motif.

This sequence belongs to the class-I aminoacyl-tRNA synthetase family. As to quaternary structure, monomer.

It is found in the cytoplasm. It catalyses the reaction tRNA(Arg) + L-arginine + ATP = L-arginyl-tRNA(Arg) + AMP + diphosphate. The sequence is that of Arginine--tRNA ligase (argS) from Mycolicibacterium smegmatis (strain ATCC 700084 / mc(2)155) (Mycobacterium smegmatis).